The primary structure comprises 2168 residues: Bromodomain adjacent to zinc finger domain protein 2B (2168 aa).

Disordered regions lie at residues Met-1–Val-29, Phe-140–Gln-348, Leu-409–Arg-428, Ser-459–His-479, Ser-528–Ala-698, Gly-719–Thr-740, Met-841–Val-872, and Arg-1021–Glu-1043. Residues Pro-8–Val-29 are compositionally biased toward low complexity. 2 stretches are compositionally biased toward polar residues: residues Asn-146–Asn-163 and Gly-171–Ala-193. Low complexity-rich tracts occupy residues Ser-194–Ser-204 and Glu-240–Ser-263. Over residues Asp-264–Ser-291 the composition is skewed to acidic residues. Over residues Ser-307–Ile-325 the composition is skewed to basic and acidic residues. Residues Ser-335 to Gln-348 are compositionally biased toward low complexity. Composition is skewed to polar residues over residues Pro-461–His-479 and Ser-528–Val-551. The span at Arg-592–Glu-605 shows a compositional bias: basic and acidic residues. Acidic residues predominate over residues Asp-606–Thr-663. Over residues Met-670 to Arg-693 the composition is skewed to polar residues. Over residues Thr-720 to Gly-732 the composition is skewed to low complexity. An MBD domain is found at Val-739–Arg-810. Positions Met-841–Arg-861 are enriched in basic and acidic residues. Positions Ala-883–Lys-1061 form a coiled coil. One can recognise a DDT domain in the interval Gly-1087 to Leu-1152. The tract at residues Lys-1265 to Ala-1341 is disordered. Residues Ser-1297–Lys-1321 are compositionally biased toward acidic residues. Basic and acidic residues predominate over residues Glu-1322–Ile-1331. Positions Asp-1334–Val-1375 form a coiled coil. Lys-1425 participates in a covalent cross-link: Glycyl lysine isopeptide (Lys-Gly) (interchain with G-Cter in SUMO2). N6-acetyllysine is present on Lys-1462. Phosphoserine occurs at positions 1465 and 1467. The span at Ser-1503–Ser-1533 shows a compositional bias: polar residues. Disordered regions lie at residues Ser-1503–Pro-1542, Ser-1582–Gln-1607, and Thr-1670–Ala-1694. Residues Ser-1588–Ala-1600 are compositionally biased toward pro residues. Over residues Thr-1670 to Gln-1692 the composition is skewed to polar residues. At Ser-1680 the chain carries Phosphoserine. The PHD-type zinc finger occupies Lys-1931 to Lys-1981. Residues Lys-1998–Glu-2040 form a disordered region. Residue Thr-2014 is modified to Phosphothreonine. Ser-2019 carries the post-translational modification Phosphoserine. Over residues Gly-2029 to Glu-2040 the composition is skewed to basic and acidic residues. Residues Arg-2060–Thr-2164 enclose the Bromo domain.

The protein belongs to the WAL family. Component of the BRF-1 ISWI chromatin remodeling complex, at least composed of SMARCA1 and BAZ2B, which regulates the spacing of histone octamers on the DNA template to facilitate access to DNA. Within the BRF-1 ISWI chromatin remodeling complex interacts with SMARCA1; the interaction is direct. Component of the BRF-5 ISWI chromatin remodeling complex, at least composed of SMARCA5/SNF2H and BAZ2B, which regulates the spacing of histone octamers on the DNA template to facilitate access to DNA. Within the BRF-5 ISWI chromatin remodeling complex interacts with SMARCA5/SNF2H; the interaction is direct. Interacts with acetylated lysine residues on histone H1.4, H2A, H2B, H3 and H4 (in vitro). Interacts with EHMT1. As to expression, expressed at varying levels in several tissues, whereas a smaller transcript was expressed specifically in testis.

The protein localises to the nucleus. In terms of biological role, regulatory subunit of the ATP-dependent BRF-1 and BRF-5 ISWI chromatin remodeling complexes, which form ordered nucleosome arrays on chromatin and facilitate access to DNA during DNA-templated processes such as DNA replication, transcription, and repair. Both complexes regulate the spacing of nucleosomes along the chromatin and have the ability to slide mononucleosomes to the center of a DNA template. The BRF-1 ISWI chromatin remodeling complex has a lower ATP hydrolysis rate than the BRF-5 ISWI chromatin remodeling complex. Chromatin reader protein, which may play a role in transcriptional regulation via interaction with ISWI. Involved in positively modulating the rate of age-related behavioral deterioration. Represses the expression of mitochondrial function-related genes, perhaps by occupying their promoter regions, working in concert with histone methyltransferase EHMT1. This Homo sapiens (Human) protein is Bromodomain adjacent to zinc finger domain protein 2B (BAZ2B).